Consider the following 357-residue polypeptide: Probable butyrate kinase 1 (357 aa).

This sequence belongs to the acetokinase family.

The protein resides in the cytoplasm. It carries out the reaction butanoate + ATP = butanoyl phosphate + ADP. The sequence is that of Probable butyrate kinase 1 from Thermotoga maritima (strain ATCC 43589 / DSM 3109 / JCM 10099 / NBRC 100826 / MSB8).